The primary structure comprises 329 residues: GTP 3',8-cyclase (329 aa).

A Radical SAM core domain is found at 8–234; it reads AFARKFYYLR…QLRQRSDGPA (227 aa). Arginine 17 is a binding site for GTP. Residues cysteine 24 and cysteine 28 each coordinate [4Fe-4S] cluster. Tyrosine 30 contacts S-adenosyl-L-methionine. Cysteine 31 lines the [4Fe-4S] cluster pocket. GTP is bound at residue arginine 68. S-adenosyl-L-methionine is bound at residue glycine 72. Residue threonine 99 participates in GTP binding. Serine 123 contacts S-adenosyl-L-methionine. Lysine 160 contributes to the GTP binding site. An S-adenosyl-L-methionine-binding site is contributed by methionine 194. 2 residues coordinate [4Fe-4S] cluster: cysteine 257 and cysteine 260. 262–264 serves as a coordination point for GTP; it reads RLR. Cysteine 274 serves as a coordination point for [4Fe-4S] cluster.

Belongs to the radical SAM superfamily. MoaA family. Monomer and homodimer. [4Fe-4S] cluster serves as cofactor.

The catalysed reaction is GTP + AH2 + S-adenosyl-L-methionine = (8S)-3',8-cyclo-7,8-dihydroguanosine 5'-triphosphate + 5'-deoxyadenosine + L-methionine + A + H(+). Its pathway is cofactor biosynthesis; molybdopterin biosynthesis. Functionally, catalyzes the cyclization of GTP to (8S)-3',8-cyclo-7,8-dihydroguanosine 5'-triphosphate. The sequence is that of GTP 3',8-cyclase from Salmonella dublin (strain CT_02021853).